The following is a 297-amino-acid chain: Cytidine deaminase (297 aa).

CMP/dCMP-type deaminase domains are found at residues 54 to 174 (SSVE…FGPK) and 192 to 297 (LRGD…YIEV). 95–97 (NQE) contacts substrate. A Zn(2+)-binding site is contributed by His-108. Residue Glu-110 is the Proton donor of the active site. Residues Cys-135 and Cys-138 each contribute to the Zn(2+) site.

The protein belongs to the cytidine and deoxycytidylate deaminase family. In terms of assembly, homodimer. It depends on Zn(2+) as a cofactor.

The enzyme catalyses cytidine + H2O + H(+) = uridine + NH4(+). The catalysed reaction is 2'-deoxycytidine + H2O + H(+) = 2'-deoxyuridine + NH4(+). Functionally, this enzyme scavenges exogenous and endogenous cytidine and 2'-deoxycytidine for UMP synthesis. The polypeptide is Cytidine deaminase (Actinobacillus pleuropneumoniae serotype 5b (strain L20)).